A 146-amino-acid polypeptide reads, in one-letter code: ATP synthase epsilon chain (146 aa).

The span at 92–116 shows a compositional bias: basic and acidic residues; the sequence is ISVDQARRDRDSLRKKLNEHERSEQ. A disordered region spans residues 92–120; that stretch reads ISVDQARRDRDSLRKKLNEHERSEQDPEV.

Belongs to the ATPase epsilon chain family. As to quaternary structure, F-type ATPases have 2 components, CF(1) - the catalytic core - and CF(0) - the membrane proton channel. CF(1) has five subunits: alpha(3), beta(3), gamma(1), delta(1), epsilon(1). CF(0) has three main subunits: a, b and c.

It localises to the cell membrane. In terms of biological role, produces ATP from ADP in the presence of a proton gradient across the membrane. This Cutibacterium acnes (strain DSM 16379 / KPA171202) (Propionibacterium acnes) protein is ATP synthase epsilon chain.